A 540-amino-acid chain; its full sequence is DM7 family protein GM11956 (540 aa).

The disordered stretch occupies residues 416–443; the sequence is ATDTRGRDEIRTSCDQPQEKDEGSAEAD. Basic and acidic residues predominate over residues 417–443; that stretch reads TDTRGRDEIRTSCDQPQEKDEGSAEAD.

This sequence belongs to the DM7 family.

This chain is DM7 family protein GM11956, found in Drosophila sechellia (Fruit fly).